A 1177-amino-acid chain; its full sequence is Dynein axonemal assembly factor 9 (1177 aa).

A disordered region spans residues 1–27; the sequence is MDVYPPRRQGLPRARSPGGSSRGSPSV. The span at 11 to 27 shows a compositional bias: low complexity; the sequence is LPRARSPGGSSRGSPSV.

In terms of assembly, interacts with ARL3.

In terms of biological role, may act as an effector for ARL3. The polypeptide is Dynein axonemal assembly factor 9 (Homo sapiens (Human)).